A 216-amino-acid chain; its full sequence is GTP-binding nuclear protein spi1 (216 aa).

Residues 6 to 170 enclose the Small GTPase Ran-type domain; the sequence is NVPTFKLVLV…LWLARKLVGN (165 aa). 17–24 is a binding site for GTP; sequence DGGTGKTT. T20 is modified (phosphothreonine). Residues 36-44 are switch-I; the sequence is KKYIATLGV. GTP contacts are provided by residues G67, 121–124, and 149–151; these read NKVD and SAK. The segment at 67-83 is switch-II; the sequence is GQEKLGGLRDGYYIQGQ.

The protein belongs to the small GTPase superfamily. Ran family. As to quaternary structure, oligomer of dis3, pim1 and spi1. Found in a nuclear export complex with RanGTP, exportin and pre-miRNA. Interacts with fft3.

It is found in the nucleus. Functionally, GTP-binding protein involved in nucleocytoplasmic transport. Required for the import of protein into the nucleus and also for RNA export. This is GTP-binding nuclear protein spi1 (spi1) from Schizosaccharomyces pombe (strain 972 / ATCC 24843) (Fission yeast).